The sequence spans 108 residues: MPKKDRAQEAPSRDVPRPEEGQTICVVKKMLGGDHLIVLCMDGKERLARIPGKIRKKMWMREGDVVLVGIWDFQPNRCDILYKYGNDEIKRLVNENIISREVIDQLRG.

Residues 11 to 85 form the S1-like domain; sequence PSRDVPRPEE…NRCDILYKYG (75 aa).

Belongs to the eIF-1A family.

Its function is as follows. Seems to be required for maximal rate of protein biosynthesis. Enhances ribosome dissociation into subunits and stabilizes the binding of the initiator Met-tRNA(I) to 40 S ribosomal subunits. This chain is Translation initiation factor 1A (eIF1A), found in Saccharolobus solfataricus (strain ATCC 35092 / DSM 1617 / JCM 11322 / P2) (Sulfolobus solfataricus).